We begin with the raw amino-acid sequence, 393 residues long: NADH-quinone oxidoreductase subunit D (393 aa).

Belongs to the complex I 49 kDa subunit family. NDH-1 is composed of 14 different subunits. Subunits NuoB, C, D, E, F, and G constitute the peripheral sector of the complex.

It localises to the cell inner membrane. The enzyme catalyses a quinone + NADH + 5 H(+)(in) = a quinol + NAD(+) + 4 H(+)(out). Its function is as follows. NDH-1 shuttles electrons from NADH, via FMN and iron-sulfur (Fe-S) centers, to quinones in the respiratory chain. The immediate electron acceptor for the enzyme in this species is believed to be ubiquinone. Couples the redox reaction to proton translocation (for every two electrons transferred, four hydrogen ions are translocated across the cytoplasmic membrane), and thus conserves the redox energy in a proton gradient. The protein is NADH-quinone oxidoreductase subunit D of Ehrlichia chaffeensis (strain ATCC CRL-10679 / Arkansas).